The sequence spans 438 residues: DNA primase DnaG (438 aa).

The Toprim domain occupies 169–243 (DSIIVVEGRA…DIDYVARAPY (75 aa)). Mg(2+)-binding residues include Glu175, Asp217, and Asp219.

Belongs to the archaeal DnaG primase family. In terms of assembly, forms a ternary complex with MCM helicase and DNA. Requires Mg(2+) as cofactor.

The catalysed reaction is ssDNA + n NTP = ssDNA/pppN(pN)n-1 hybrid + (n-1) diphosphate.. Its function is as follows. RNA polymerase that catalyzes the synthesis of short RNA molecules used as primers for DNA polymerase during DNA replication. The sequence is that of DNA primase DnaG from Methanococcus maripaludis (strain C5 / ATCC BAA-1333).